Reading from the N-terminus, the 58-residue chain is Ribulose bisphosphate carboxylase large chain (58 aa).

Residues 1–2 (MS) constitute a propeptide that is removed on maturation. Residue proline 3 is modified to N-acetylproline. Lysine 14 carries the post-translational modification N6,N6,N6-trimethyllysine.

It belongs to the RuBisCO large chain family. Type I subfamily. Heterohexadecamer of 8 large chains and 8 small chains.

Its subcellular location is the plastid. The protein localises to the chloroplast. The enzyme catalyses 2 (2R)-3-phosphoglycerate + 2 H(+) = D-ribulose 1,5-bisphosphate + CO2 + H2O. The catalysed reaction is D-ribulose 1,5-bisphosphate + O2 = 2-phosphoglycolate + (2R)-3-phosphoglycerate + 2 H(+). RuBisCO catalyzes two reactions: the carboxylation of D-ribulose 1,5-bisphosphate, the primary event in carbon dioxide fixation, as well as the oxidative fragmentation of the pentose substrate in the photorespiration process. Both reactions occur simultaneously and in competition at the same active site. This chain is Ribulose bisphosphate carboxylase large chain (rbcL), found in Euonymus maackii (Maack's spindle tree).